A 60-amino-acid chain; its full sequence is Cytotoxin 10 (60 aa).

4 disulfide bridges follow: Cys-3–Cys-21, Cys-14–Cys-38, Cys-42–Cys-53, and Cys-54–Cys-59.

This sequence belongs to the three-finger toxin family. Short-chain subfamily. Type IA cytotoxin sub-subfamily. Monomer in solution; Homodimer and oligomer in the presence of negatively charged lipids forming a pore with a size ranging between 20 and 30 Angstroms. In terms of tissue distribution, expressed by the venom gland.

Its subcellular location is the secreted. The protein localises to the target cell membrane. Shows cytolytic activity on many different cells by forming pore in lipid membranes. In vivo, increases heart rate or kills the animal by cardiac arrest. In addition, it binds to heparin with high affinity, interacts with Kv channel-interacting protein 1 (KCNIP1) in a calcium-independent manner, and binds to integrin alpha-V/beta-3 (ITGAV/ITGB3) with moderate affinity. Has hemolytic activity towards human erythrocytes (EC(50)=0.162 uM) and cytolytic activity towards various cell lines. The protein is Cytotoxin 10 of Naja naja (Indian cobra).